A 370-amino-acid polypeptide reads, in one-letter code: tRNA-specific 2-thiouridylase MnmA (370 aa).

ATP is bound by residues alanine 24–serine 31 and leucine 50. The active-site Nucleophile is cysteine 119. Cysteine 119 and cysteine 215 are joined by a disulfide. Glycine 143 serves as a coordination point for ATP. The segment at lysine 165 to glutamine 167 is interaction with tRNA. Cysteine 215 serves as the catalytic Cysteine persulfide intermediate.

It belongs to the MnmA/TRMU family.

Its subcellular location is the cytoplasm. The enzyme catalyses S-sulfanyl-L-cysteinyl-[protein] + uridine(34) in tRNA + AH2 + ATP = 2-thiouridine(34) in tRNA + L-cysteinyl-[protein] + A + AMP + diphosphate + H(+). Catalyzes the 2-thiolation of uridine at the wobble position (U34) of tRNA, leading to the formation of s(2)U34. This is tRNA-specific 2-thiouridylase MnmA from Wolbachia pipientis wMel.